A 343-amino-acid polypeptide reads, in one-letter code: Nuclear hormone receptor family member nhr-167 (343 aa).

Positions 5–81 (HQKCAVCGRF…VGMTLPSYLL (77 aa)) form a DNA-binding region, nuclear receptor. 2 NR C4-type zinc fingers span residues 8-28 (CAVC…CNSC) and 45-64 (CFRG…CTSC). One can recognise an NR LBD domain in the interval 101-339 (THNKRMDSLF…KKLVKDGIEA (239 aa)).

Belongs to the nuclear hormone receptor family.

It is found in the nucleus. Functionally, orphan nuclear receptor. The chain is Nuclear hormone receptor family member nhr-167 (nhr-167) from Caenorhabditis elegans.